The primary structure comprises 481 residues: Squalene epoxidase erg1 (481 aa).

A helical transmembrane segment spans residues 28 to 48 (HADVVIIGAGVLGCALAVALG). FAD-binding positions include 38–39 (VL), 58–59 (EA), Arg-66, and Arg-138. N-linked (GlcNAc...) asparagine glycosylation occurs at Asn-146. FAD-binding residues include Asp-319 and Met-332. 2 helical membrane-spanning segments follow: residues 425-445 (KPSV…WVLL) and 452-472 (LFPV…VVIF).

Belongs to the squalene monooxygenase family. FAD serves as cofactor.

It is found in the endoplasmic reticulum membrane. The protein resides in the microsome membrane. It carries out the reaction squalene + reduced [NADPH--hemoprotein reductase] + O2 = (S)-2,3-epoxysqualene + oxidized [NADPH--hemoprotein reductase] + H2O + H(+). It functions in the pathway steroid metabolism; ergosterol biosynthesis. In terms of biological role, squalene epoxidase; part of the third module of ergosterol biosynthesis pathway that includes the late steps of the pathway. Erg1 catalyzes the epoxidation of squalene into 2,3-epoxysqualene. The third module or late pathway involves the ergosterol synthesis itself through consecutive reactions that mainly occur in the endoplasmic reticulum (ER) membrane. Firstly, the squalene synthase erg9 catalyzes the condensation of 2 farnesyl pyrophosphate moieties to form squalene, which is the precursor of all steroids. Squalene synthase is crucial for balancing the incorporation of farnesyl diphosphate (FPP) into sterol and nonsterol isoprene synthesis. Secondly, squalene is converted into lanosterol by the consecutive action of the squalene epoxidase erg1 and the lanosterol synthase erg7. Then, the delta(24)-sterol C-methyltransferase erg6 methylates lanosterol at C-24 to produce eburicol. Eburicol is the substrate of the sterol 14-alpha demethylase encoded by cyp51A and cyp51B, to yield 4,4,24-trimethyl ergosta-8,14,24(28)-trienol. The C-14 reductase erg24 then reduces the C14=C15 double bond which leads to 4,4-dimethylfecosterol. A sequence of further demethylations at C-4, involving the C-4 demethylation complex containing the C-4 methylsterol oxidases erg25A or erg25B, the sterol-4-alpha-carboxylate 3-dehydrogenase erg26 and the 3-keto-steroid reductase erg27, leads to the production of fecosterol via 4-methylfecosterol. The C-8 sterol isomerase erg2 then catalyzes the reaction which results in unsaturation at C-7 in the B ring of sterols and thus converts fecosterol to episterol. The sterol-C5-desaturase erg3B then catalyzes the introduction of a C-5 double bond in the B ring to produce 5-dehydroepisterol. The 2 other sterol-C5-desaturases, erg3A and erg3C, seem to be less important in ergosterol biosynthesis. The C-22 sterol desaturase erg5 further converts 5-dehydroepisterol into ergosta-5,7,22,24(28)-tetraen-3beta-ol by forming the C-22(23) double bond in the sterol side chain. Finally, ergosta-5,7,22,24(28)-tetraen-3beta-ol is substrate of the C-24(28) sterol reductases erg4A and erg4B to produce ergosterol. Possible alternative sterol biosynthetic pathways might exist from fecosterol to ergosterol, depending on the activities of the erg3 isoforms. The protein is Squalene epoxidase erg1 of Aspergillus fumigatus (strain ATCC MYA-4609 / CBS 101355 / FGSC A1100 / Af293) (Neosartorya fumigata).